Consider the following 481-residue polypeptide: Protein nucleotidyltransferase YdiU (481 aa).

ATP is bound by residues Gly85, Gly87, Arg88, Lys108, Asp120, Gly121, Arg172, and Arg179. Asp248 acts as the Proton acceptor in catalysis. Mg(2+) contacts are provided by Asn249 and Asp258. Asp258 serves as a coordination point for ATP.

The protein belongs to the SELO family. Mg(2+) serves as cofactor. It depends on Mn(2+) as a cofactor.

The catalysed reaction is L-seryl-[protein] + ATP = 3-O-(5'-adenylyl)-L-seryl-[protein] + diphosphate. The enzyme catalyses L-threonyl-[protein] + ATP = 3-O-(5'-adenylyl)-L-threonyl-[protein] + diphosphate. It catalyses the reaction L-tyrosyl-[protein] + ATP = O-(5'-adenylyl)-L-tyrosyl-[protein] + diphosphate. It carries out the reaction L-histidyl-[protein] + UTP = N(tele)-(5'-uridylyl)-L-histidyl-[protein] + diphosphate. The catalysed reaction is L-seryl-[protein] + UTP = O-(5'-uridylyl)-L-seryl-[protein] + diphosphate. The enzyme catalyses L-tyrosyl-[protein] + UTP = O-(5'-uridylyl)-L-tyrosyl-[protein] + diphosphate. Functionally, nucleotidyltransferase involved in the post-translational modification of proteins. It can catalyze the addition of adenosine monophosphate (AMP) or uridine monophosphate (UMP) to a protein, resulting in modifications known as AMPylation and UMPylation. This Cereibacter sphaeroides (strain ATCC 17029 / ATH 2.4.9) (Rhodobacter sphaeroides) protein is Protein nucleotidyltransferase YdiU.